A 79-amino-acid polypeptide reads, in one-letter code: Small cysteine-rich protein 2 (79 aa).

An N-terminal signal peptide occupies residues 1-21 (MRSQHVLILLLGLVCASQVLG). The propeptide occupies 22-35 (KHLTKVKAKALHYD).

It belongs to the Cnidaria small cysteine-rich protein (SCRiP) family. delta subfamily. Post-translationally, contains 4 disulfide bonds.

Its subcellular location is the secreted. The protein resides in the nematocyst. Functionally, this recombinant protein induces severe neurotoxicity on zebrafish larvae (Danio rerio) at a concentration of 230 mg/ml, but does not show toxicity when injected in blowfly larvae (Sarcophaga falculata). All fish incubated with this protein died within 200 minutes of exposure. Has also been claimed to be implied in calcification, but this function seems improbable. This chain is Small cysteine-rich protein 2, found in Acropora millepora (Staghorn coral).